The sequence spans 301 residues: MSELISVVVPIYNTGKYLVECVEHILKQTYQNIEIILVDDGSTDNSGEICDAFMMQDNRVRVLHQENKGGAAQAKNMGISVAKGEYITIVDSDDIVKENMIETLYQQVQEKDADVVIGNYYNYDESDGNFYFYVTGQDFCVEELAIQEIMNRQAGDWKFNSSAFILPTFKLIKKELFNEVHFSNGRRFDDEATMHRFYLLASKIVFINDNLYLYRRRSGSIMRTEFDLSWARDIVEVFSKKISDCVLAGLDVSVLRIRFVNLLKDYKQTLEYHQLTDTEEYKDICFRLKLFFDAEQRNGKS.

It belongs to the glycosyltransferase 2 family.

The protein operates within protein modification; protein glycosylation. Functionally, involved in the polymorphic O-glycosylation of the serine-rich repeat protein PsrP. Catalyzes the third step in glycosylation PsrP in this bacteria. Transfers glucose from UDP-glucose to the terminal glucose moiety of already-glycosylated PsrP (using truncated substrates with PsrP SSR1-GlcNAc-Glc). Has a marked preference for PsrP substrate that has already been modified by GlcNAc and glucose. In vitro has hydrolytic activity against UDP-glucose and to a lesser extent against UDP-galactose. In terms of biological role, also catalyzes the fourth step in glycosylation of the serine-rich repeat protein PsrP in this bacteria. Can transfer the sugar from UDP-glucose (and much less well from UDP-galactose) to the terminal sugar moiety of PsrP-GlcNAc-Glc-Gal or of PsrP-GlcNAc-Glc-Glc. This is Glycosyltransferase GlyG from Streptococcus pneumoniae serotype 4 (strain ATCC BAA-334 / TIGR4).